The sequence spans 112 residues: Signal recognition particle 19 kDa protein (112 aa).

Belongs to the SRP19 family. As to quaternary structure, part of the signal recognition particle protein translocation system, which is composed of SRP and FtsY. Archaeal SRP consists of a 7S RNA molecule of 300 nucleotides and two protein subunits: SRP54 and SRP19.

The protein localises to the cytoplasm. Involved in targeting and insertion of nascent membrane proteins into the cytoplasmic membrane. Binds directly to 7S RNA and mediates binding of the 54 kDa subunit of the SRP. In Aeropyrum pernix (strain ATCC 700893 / DSM 11879 / JCM 9820 / NBRC 100138 / K1), this protein is Signal recognition particle 19 kDa protein.